The primary structure comprises 143 residues: Nucleoside diphosphate kinase (143 aa).

ATP-binding residues include lysine 11, phenylalanine 59, arginine 87, threonine 93, arginine 104, and asparagine 114. Histidine 117 (pros-phosphohistidine intermediate) is an active-site residue.

Belongs to the NDK family. In terms of assembly, homotetramer. The cofactor is Mg(2+).

It localises to the cytoplasm. The enzyme catalyses a 2'-deoxyribonucleoside 5'-diphosphate + ATP = a 2'-deoxyribonucleoside 5'-triphosphate + ADP. It carries out the reaction a ribonucleoside 5'-diphosphate + ATP = a ribonucleoside 5'-triphosphate + ADP. Major role in the synthesis of nucleoside triphosphates other than ATP. The ATP gamma phosphate is transferred to the NDP beta phosphate via a ping-pong mechanism, using a phosphorylated active-site intermediate. This is Nucleoside diphosphate kinase from Klebsiella pneumoniae (strain 342).